Consider the following 263-residue polypeptide: Chymotrypsinogen 2 (263 aa).

The signal sequence occupies residues 1–18; that stretch reads MAFLWLLSCFALLGTAFG. 5 disulfide bridges follow: Cys19/Cys140, Cys60/Cys76, Cys154/Cys219, Cys186/Cys200, and Cys209/Cys238. The 228-residue stretch at 34 to 261 folds into the Peptidase S1 domain; that stretch reads IVNGEDAVPG…LIPWVQQILQ (228 aa). Catalysis depends on His75, which acts as the Charge relay system. Residue Ser93 is modified to Phosphoserine. Catalysis depends on Asp120, which acts as the Charge relay system. Ser213 acts as the Charge relay system in catalysis.

It belongs to the peptidase S1 family.

It localises to the secreted. It is found in the extracellular space. The enzyme catalyses Preferential cleavage: Tyr-|-Xaa, Trp-|-Xaa, Phe-|-Xaa, Leu-|-Xaa.. The sequence is that of Chymotrypsinogen 2 (CTRB1) from Canis lupus familiaris (Dog).